The chain runs to 458 residues: Phosphoglucosamine mutase (458 aa).

Catalysis depends on S106, which acts as the Phosphoserine intermediate. 4 residues coordinate Mg(2+): S106, D247, D249, and D251. S106 bears the Phosphoserine mark.

The protein belongs to the phosphohexose mutase family. The cofactor is Mg(2+). Post-translationally, activated by phosphorylation.

The catalysed reaction is alpha-D-glucosamine 1-phosphate = D-glucosamine 6-phosphate. Its function is as follows. Catalyzes the conversion of glucosamine-6-phosphate to glucosamine-1-phosphate. This Chlamydia pneumoniae (Chlamydophila pneumoniae) protein is Phosphoglucosamine mutase.